Here is a 180-residue protein sequence, read N- to C-terminus: Large ribosomal subunit protein uL5 (180 aa).

Belongs to the universal ribosomal protein uL5 family. In terms of assembly, part of the 50S ribosomal subunit; part of the 5S rRNA/L5/L18/L25 subcomplex. Contacts the 5S rRNA and the P site tRNA. Forms a bridge to the 30S subunit in the 70S ribosome.

Its function is as follows. This is one of the proteins that bind and probably mediate the attachment of the 5S RNA into the large ribosomal subunit, where it forms part of the central protuberance. In the 70S ribosome it contacts protein S13 of the 30S subunit (bridge B1b), connecting the 2 subunits; this bridge is implicated in subunit movement. Contacts the P site tRNA; the 5S rRNA and some of its associated proteins might help stabilize positioning of ribosome-bound tRNAs. In Lactiplantibacillus plantarum (strain ATCC BAA-793 / NCIMB 8826 / WCFS1) (Lactobacillus plantarum), this protein is Large ribosomal subunit protein uL5.